Here is a 490-residue protein sequence, read N- to C-terminus: Betaine aldehyde dehydrogenase (490 aa).

3 residues coordinate K(+): Thr-26, Ile-27, and Asp-93. 150–152 contributes to the NAD(+) binding site; the sequence is GAW. The active-site Charge relay system is Lys-162. Position 176–179 (176–179) interacts with NAD(+); that stretch reads KPSE. K(+) is bound at residue Val-180. Residue 230–233 coordinates NAD(+); that stretch reads GVAS. A K(+)-binding site is contributed by Leu-246. Glu-252 acts as the Proton acceptor in catalysis. NAD(+) is bound by residues Gly-254, Cys-286, and Glu-387. Catalysis depends on Cys-286, which acts as the Nucleophile. Residue Cys-286 is modified to Cysteine sulfenic acid (-SOH). Positions 457 and 460 each coordinate K(+). The active-site Charge relay system is Glu-464.

Belongs to the aldehyde dehydrogenase family. Dimer of dimers. K(+) serves as cofactor.

It catalyses the reaction betaine aldehyde + NAD(+) + H2O = glycine betaine + NADH + 2 H(+). It functions in the pathway amine and polyamine biosynthesis; betaine biosynthesis via choline pathway; betaine from betaine aldehyde: step 1/1. Involved in the biosynthesis of the osmoprotectant glycine betaine. Catalyzes the irreversible oxidation of betaine aldehyde to the corresponding acid. The sequence is that of Betaine aldehyde dehydrogenase from Escherichia coli O8 (strain IAI1).